The sequence spans 132 residues: Fatty acid-binding protein, adipocyte (132 aa).

The Nuclear localization signal signature appears at 22–32 (KELGVGFATRK). Arginine 107 and arginine 127 together coordinate (9Z,12Z)-octadecadienoate.

It belongs to the calycin superfamily. Fatty-acid binding protein (FABP) family. Monomer.

The protein resides in the cytoplasm. The protein localises to the nucleus. Functionally, lipid transport protein in adipocytes. Binds both long chain fatty acids and retinoic acid. Delivers long-chain fatty acids and retinoic acid to their cognate receptors in the nucleus. Has the highest binding affinity for linoleic acid and decreasing relative affinity for eicosapentaenoic acid (EPA), alpha-linolenic acid (ALA), docosahexaenoic acid (DHA), oleic acid, palmitic acid and stearic acid, respectively. The protein is Fatty acid-binding protein, adipocyte of Pygoscelis papua (Gentoo penguin).